The chain runs to 380 residues: 3-dehydroquinate synthase (380 aa).

NAD(+)-binding positions include 68–73 (PGEPNK), 102–106 (GTVLD), 126–127 (TT), lysine 139, and lysine 148. Zn(2+) is bound by residues glutamate 181, histidine 243, and histidine 259.

The protein belongs to the sugar phosphate cyclases superfamily. Dehydroquinate synthase family. Requires NAD(+) as cofactor. Co(2+) serves as cofactor. Zn(2+) is required as a cofactor.

It is found in the cytoplasm. It catalyses the reaction 7-phospho-2-dehydro-3-deoxy-D-arabino-heptonate = 3-dehydroquinate + phosphate. It functions in the pathway metabolic intermediate biosynthesis; chorismate biosynthesis; chorismate from D-erythrose 4-phosphate and phosphoenolpyruvate: step 2/7. Catalyzes the conversion of 3-deoxy-D-arabino-heptulosonate 7-phosphate (DAHP) to dehydroquinate (DHQ). This Chlamydia pneumoniae (Chlamydophila pneumoniae) protein is 3-dehydroquinate synthase (aroB).